Consider the following 229-residue polypeptide: NADH dehydrogenase [ubiquinone] iron-sulfur protein 8, mitochondrial (229 aa).

The transit peptide at 1-41 (MAAILARKSLSALRSRQLVLAGHTIEGTNGYNRTLLGTRSF) directs the protein to the mitochondrion. 4Fe-4S ferredoxin-type domains are found at residues 121-150 (RRYA…IEAE) and 160-189 (TRYD…EGPN). Positions 130, 133, 136, 140, 169, 172, 175, and 179 each coordinate [4Fe-4S] cluster.

This sequence belongs to the complex I 23 kDa subunit family. Complex I is composed of about 45 different subunits. This is a component of the iron-sulfur (IP) fragment of the enzyme. It depends on [4Fe-4S] cluster as a cofactor. In terms of tissue distribution, lowest expression found in storage tissues of tubers. Higher expression in older leaves than younger ones. Highest expression found in flowers.

The protein resides in the mitochondrion inner membrane. It carries out the reaction a ubiquinone + NADH + 5 H(+)(in) = a ubiquinol + NAD(+) + 4 H(+)(out). Core subunit of the mitochondrial membrane respiratory chain NADH dehydrogenase (Complex I) that is believed to belong to the minimal assembly required for catalysis. Complex I functions in the transfer of electrons from NADH to the respiratory chain. The immediate electron acceptor for the enzyme is believed to be ubiquinone. May donate electrons to ubiquinone. This is NADH dehydrogenase [ubiquinone] iron-sulfur protein 8, mitochondrial from Solanum tuberosum (Potato).